The primary structure comprises 280 residues: 4-diphosphocytidyl-2-C-methyl-D-erythritol kinase (280 aa).

The active site involves Lys-8. 91-101 (PVSAGLAGGST) is an ATP binding site. Asp-133 is an active-site residue.

Belongs to the GHMP kinase family. IspE subfamily.

It catalyses the reaction 4-CDP-2-C-methyl-D-erythritol + ATP = 4-CDP-2-C-methyl-D-erythritol 2-phosphate + ADP + H(+). Its pathway is isoprenoid biosynthesis; isopentenyl diphosphate biosynthesis via DXP pathway; isopentenyl diphosphate from 1-deoxy-D-xylulose 5-phosphate: step 3/6. Its function is as follows. Catalyzes the phosphorylation of the position 2 hydroxy group of 4-diphosphocytidyl-2C-methyl-D-erythritol. This is 4-diphosphocytidyl-2-C-methyl-D-erythritol kinase from Clostridium botulinum (strain Eklund 17B / Type B).